The sequence spans 150 residues: Globin-3 (150 aa).

A Globin domain is found at 11–150; the sequence is PLTAADKTKI…IICILLNSAY (140 aa). Heme b is bound by residues H74 and H106.

Belongs to the globin family. In terms of assembly, monomer.

The sequence is that of Globin-3 from Mordacia mordax (Southern hemisphere lamprey).